A 556-amino-acid polypeptide reads, in one-letter code: Arginine--tRNA ligase (556 aa).

A 'HIGH' region motif is present at residues 132–142 (ANPTGDLHLGH).

The protein belongs to the class-I aminoacyl-tRNA synthetase family. In terms of assembly, monomer.

It localises to the cytoplasm. It carries out the reaction tRNA(Arg) + L-arginine + ATP = L-arginyl-tRNA(Arg) + AMP + diphosphate. The protein is Arginine--tRNA ligase of Bacillus cereus (strain ATCC 10987 / NRS 248).